The following is a 505-amino-acid chain: Lysine--tRNA ligase (505 aa).

Mg(2+)-binding residues include Glu-415 and Glu-422.

Belongs to the class-II aminoacyl-tRNA synthetase family. Homodimer. Mg(2+) is required as a cofactor.

It is found in the cytoplasm. It carries out the reaction tRNA(Lys) + L-lysine + ATP = L-lysyl-tRNA(Lys) + AMP + diphosphate. The sequence is that of Lysine--tRNA ligase from Pectobacterium carotovorum subsp. carotovorum (strain PC1).